A 387-amino-acid polypeptide reads, in one-letter code: Dual-specificity RNA methyltransferase RlmN (387 aa).

E93 acts as the Proton acceptor in catalysis. Residues 99–343 form the Radical SAM core domain; that stretch reads EENRGTLCIS…TTVRKTRGDD (245 aa). C106 and C348 are oxidised to a cystine. [4Fe-4S] cluster contacts are provided by C113, C117, and C120. S-adenosyl-L-methionine contacts are provided by residues 172-173, S204, 226-228, and N305; these read GE and SLH. The active-site S-methylcysteine intermediate is C348.

This sequence belongs to the radical SAM superfamily. RlmN family. [4Fe-4S] cluster serves as cofactor.

The protein resides in the cytoplasm. The enzyme catalyses adenosine(2503) in 23S rRNA + 2 reduced [2Fe-2S]-[ferredoxin] + 2 S-adenosyl-L-methionine = 2-methyladenosine(2503) in 23S rRNA + 5'-deoxyadenosine + L-methionine + 2 oxidized [2Fe-2S]-[ferredoxin] + S-adenosyl-L-homocysteine. It catalyses the reaction adenosine(37) in tRNA + 2 reduced [2Fe-2S]-[ferredoxin] + 2 S-adenosyl-L-methionine = 2-methyladenosine(37) in tRNA + 5'-deoxyadenosine + L-methionine + 2 oxidized [2Fe-2S]-[ferredoxin] + S-adenosyl-L-homocysteine. Its function is as follows. Specifically methylates position 2 of adenine 2503 in 23S rRNA and position 2 of adenine 37 in tRNAs. m2A2503 modification seems to play a crucial role in the proofreading step occurring at the peptidyl transferase center and thus would serve to optimize ribosomal fidelity. The sequence is that of Dual-specificity RNA methyltransferase RlmN from Janthinobacterium sp. (strain Marseille) (Minibacterium massiliensis).